The primary structure comprises 290 residues: Elongation factor Ts (290 aa).

Positions Thr-87–Val-90 are involved in Mg(2+) ion dislocation from EF-Tu.

This sequence belongs to the EF-Ts family.

It is found in the cytoplasm. Associates with the EF-Tu.GDP complex and induces the exchange of GDP to GTP. It remains bound to the aminoacyl-tRNA.EF-Tu.GTP complex up to the GTP hydrolysis stage on the ribosome. This chain is Elongation factor Ts (tsf), found in Treponema pallidum (strain Nichols).